The primary structure comprises 203 residues: CASP-like protein 5A2 (203 aa).

At 1-63 the chain is on the cytoplasmic side; that stretch reads MRASRPVVHP…KDPPGAPGTP (63 aa). The disordered stretch occupies residues 39-58; that stretch reads AAHGGENAQPRGVRMKDPPG. Residues 64–84 traverse the membrane as a helical segment; sequence GGLGLRLVQAFFAAAALAVMA. At 85–94 the chain is on the extracellular side; it reads STDDFPSVSA. The helical transmembrane segment at 95 to 115 threads the bilayer; that stretch reads FCYLVAAAILQCLWSLSLAVV. Residues 116–139 are Cytoplasmic-facing; that stretch reads DIYALLVKRSLRNPQAVCIFTIGD. The chain crosses the membrane as a helical span at residues 140 to 160; it reads GITGTLTLGAACASAGITVLI. Over 161 to 177 the chain is Extracellular; that stretch reads GNDLNICANNHCASFET. A helical transmembrane segment spans residues 178 to 198; it reads ATAMAFISWFALAPSCVLNFW. The Cytoplasmic segment spans residues 199 to 203; it reads SMASR.

The protein belongs to the Casparian strip membrane proteins (CASP) family. In terms of assembly, homodimer and heterodimers.

The protein localises to the cell membrane. The chain is CASP-like protein 5A2 from Oryza sativa subsp. indica (Rice).